Here is a 274-residue protein sequence, read N- to C-terminus: Kit ligand (274 aa).

An N-terminal signal peptide occupies residues 1 to 25 (MKKTQTWIITCIYLQLLLFNPLVKT). Over 26 to 215 (KGICENRVTD…SNFTGDSNLQ (190 aa)) the chain is Extracellular. 2 disulfide bridges follow: C29-C114 and C68-C164. N-linked (GlcNAc...) asparagine glycosylation is found at N90, N97, N145, N196, and N207. A helical membrane pass occupies residues 216–238 (WAAMALPAFFSLVIGFAFGALYW). At 239-274 (KKKQPNLTRAVENIQINEEDNEISMLQEKEREFQEV) the chain is on the cytoplasmic side.

The protein belongs to the SCF family. As to quaternary structure, homodimer, non-covalently linked. A soluble form is produced by proteolytic processing of the extracellular domain.

The protein localises to the cytoplasm. It is found in the cytoskeleton. The protein resides in the cell membrane. Its subcellular location is the cell projection. It localises to the lamellipodium. The protein localises to the filopodium. It is found in the secreted. Its function is as follows. Stimulates the proliferation of mast cells. Able to augment the proliferation of both myeloid and lymphoid hematopoietic progenitors in bone marrow culture. Also mediates cell-cell adhesion. Acts synergistically with other cytokines, probably interleukins. The polypeptide is Kit ligand (KITLG) (Equus caballus (Horse)).